We begin with the raw amino-acid sequence, 247 residues long: DNA polymerase sliding clamp (247 aa).

It belongs to the PCNA family. Homotrimer. The subunits circularize to form a toroid; DNA passes through its center. Replication factor C (RFC) is required to load the toroid on the DNA.

Its function is as follows. Sliding clamp subunit that acts as a moving platform for DNA processing. Responsible for tethering the catalytic subunit of DNA polymerase and other proteins to DNA during high-speed replication. This chain is DNA polymerase sliding clamp, found in Methanoculleus marisnigri (strain ATCC 35101 / DSM 1498 / JR1).